The following is a 467-amino-acid chain: ATP synthase subunit beta, chloroplastic (467 aa).

ATP is bound at residue 149–156; sequence GGAGVGKT.

It belongs to the ATPase alpha/beta chains family. As to quaternary structure, F-type ATPases have 2 components, CF(1) - the catalytic core - and CF(0) - the membrane proton channel. CF(1) has five subunits: alpha(3), beta(3), gamma(1), delta(1), epsilon(1). CF(0) has four main subunits: a(1), b(1), b'(1) and c(9-12).

The protein resides in the plastid. Its subcellular location is the chloroplast thylakoid membrane. The enzyme catalyses ATP + H2O + 4 H(+)(in) = ADP + phosphate + 5 H(+)(out). Its function is as follows. Produces ATP from ADP in the presence of a proton gradient across the membrane. The catalytic sites are hosted primarily by the beta subunits. The protein is ATP synthase subunit beta, chloroplastic of Cyanidioschyzon merolae (strain NIES-3377 / 10D) (Unicellular red alga).